The primary structure comprises 60 residues: Protein translocase subunit SecE (60 aa).

A helical transmembrane segment spans residues 31–51 (IIVVSTVIFFLVFFYALDIGI).

The protein belongs to the SecE/SEC61-gamma family. In terms of assembly, component of the Sec protein translocase complex. Heterotrimer consisting of SecY, SecE and SecG subunits. The heterotrimers can form oligomers, although 1 heterotrimer is thought to be able to translocate proteins. Interacts with the ribosome. Interacts with SecDF, and other proteins may be involved. Interacts with SecA.

Its subcellular location is the cell membrane. Essential subunit of the Sec protein translocation channel SecYEG. Clamps together the 2 halves of SecY. May contact the channel plug during translocation. This chain is Protein translocase subunit SecE, found in Staphylococcus epidermidis (strain ATCC 35984 / DSM 28319 / BCRC 17069 / CCUG 31568 / BM 3577 / RP62A).